The primary structure comprises 132 residues: Fatty acid-binding protein, brain (132 aa).

Residue Val-2 is modified to N-acetylvaline. Residue 127–129 participates in a fatty acid binding; that stretch reads RHY.

The protein belongs to the calycin superfamily. Fatty-acid binding protein (FABP) family. Expressed in brain and other neural tissues.

The protein localises to the cytoplasm. In terms of biological role, B-FABP could be involved in the transport of a so far unknown hydrophobic ligand with potential morphogenic activity during CNS development. It is required for the establishment of the radial glial fiber system in developing brain, a system that is necessary for the migration of immature neurons to establish cortical layers. This chain is Fatty acid-binding protein, brain (FABP7), found in Homo sapiens (Human).